The chain runs to 380 residues: MTTTYKILVLPGDHIGPEIMAEAIKVLTTIETHRPNLHFNLTTDLVGGTSIDTHGVPITQSVLDAAKASDAVLFGSIGGPEWAGVHPTPESGLLQLRQHLDAFANLRPCEFLVPSLVGASPIREHVVKGTRFIVVRENCGGAYFGEKKEEEDVASDLWVYTRPEIERLARVSAAVARIMGRSEDDNQAATVWSADKANVLASGRLWRRITSDIFAKEFPDITLQHQLADSMAMLMVRDPRRFNGVIHTDNTFGDILSDISGAITGTLGLMPSASLCGVPGEGHRSNGIYEPVHGSAPDISGKGLANPVAQILSVAMMLRYSMGLEKEATAVERAVVKVLDAKSEGGLEIRTGDLGGRATCSQVGDAVCEVLGPLLQGKKA.

79 to 90 is a binding site for NAD(+); the sequence is GPEWAGVHPTPE. 4 residues coordinate substrate: Arg-97, Arg-107, Arg-136, and Asp-229. The Mg(2+) site is built by Asp-229, Asp-254, and Asp-258. 294-306 is an NAD(+) binding site; that stretch reads GSAPDISGKGLAN.

The protein belongs to the isocitrate and isopropylmalate dehydrogenases family. As to quaternary structure, homodimer. The cofactor is Mg(2+). Mn(2+) is required as a cofactor.

Its subcellular location is the cytoplasm. The enzyme catalyses (2R,3S)-3-isopropylmalate + NAD(+) = 4-methyl-2-oxopentanoate + CO2 + NADH. It participates in amino-acid biosynthesis; L-leucine biosynthesis; L-leucine from 3-methyl-2-oxobutanoate: step 3/4. Catalyzes the oxidation of 3-carboxy-2-hydroxy-4-methylpentanoate (3-isopropylmalate) to 3-carboxy-4-methyl-2-oxopentanoate. The product decarboxylates to 4-methyl-2 oxopentanoate. The polypeptide is 3-isopropylmalate dehydrogenase (LEU2) (Hapsidospora chrysogena (Acremonium chrysogenum)).